The primary structure comprises 896 residues: Bifunctional glutamine synthetase adenylyltransferase/adenylyl-removing enzyme (896 aa).

The segment at Met1–Glu411 is adenylyl removase. Residues Asn417–Val896 form an adenylyl transferase region.

This sequence belongs to the GlnE family. Mg(2+) is required as a cofactor.

The catalysed reaction is [glutamine synthetase]-O(4)-(5'-adenylyl)-L-tyrosine + phosphate = [glutamine synthetase]-L-tyrosine + ADP. The enzyme catalyses [glutamine synthetase]-L-tyrosine + ATP = [glutamine synthetase]-O(4)-(5'-adenylyl)-L-tyrosine + diphosphate. Involved in the regulation of glutamine synthetase GlnA, a key enzyme in the process to assimilate ammonia. When cellular nitrogen levels are high, the C-terminal adenylyl transferase (AT) inactivates GlnA by covalent transfer of an adenylyl group from ATP to specific tyrosine residue of GlnA, thus reducing its activity. Conversely, when nitrogen levels are low, the N-terminal adenylyl removase (AR) activates GlnA by removing the adenylyl group by phosphorolysis, increasing its activity. The regulatory region of GlnE binds the signal transduction protein PII (GlnB) which indicates the nitrogen status of the cell. The sequence is that of Bifunctional glutamine synthetase adenylyltransferase/adenylyl-removing enzyme from Neisseria meningitidis serogroup B (strain ATCC BAA-335 / MC58).